The primary structure comprises 285 residues: Bifunctional protein FolD (285 aa).

166–168 (GAS) contacts NADP(+).

This sequence belongs to the tetrahydrofolate dehydrogenase/cyclohydrolase family. As to quaternary structure, homodimer.

The catalysed reaction is (6R)-5,10-methylene-5,6,7,8-tetrahydrofolate + NADP(+) = (6R)-5,10-methenyltetrahydrofolate + NADPH. The enzyme catalyses (6R)-5,10-methenyltetrahydrofolate + H2O = (6R)-10-formyltetrahydrofolate + H(+). The protein operates within one-carbon metabolism; tetrahydrofolate interconversion. Catalyzes the oxidation of 5,10-methylenetetrahydrofolate to 5,10-methenyltetrahydrofolate and then the hydrolysis of 5,10-methenyltetrahydrofolate to 10-formyltetrahydrofolate. This Thioalkalivibrio sulfidiphilus (strain HL-EbGR7) protein is Bifunctional protein FolD.